Consider the following 468-residue polypeptide: FAD-linked oxidoreductase hasG (468 aa).

Residues 37–211 (LGKIPAAVVQ…VEATFRAYPW (175 aa)) enclose the FAD-binding PCMH-type domain.

It belongs to the oxygen-dependent FAD-linked oxidoreductase family. Requires FAD as cofactor.

Its pathway is secondary metabolite biosynthesis. FAD-linked oxidoreductase; part of the gene cluster that mediates the biosynthesis of hexadehydro-astechrome (HAS), a tryptophan-derived iron(III)-complex that acts as a virulence factor in infected mice. Within the pathway, hasG converts the prenyl to a methylbutadienyl side chain. The HAS biosynthesis begins with the synthesis of a tethered Trp-Ala dipeptide by the NRPS hasD. The 7-dimethylallyltryptophan synthase hasE then catalyzes the prenylation of the hasD-tethered tryptophan or the resulting tethered Trp-Ala dipeptide at the C-7 position of the indole moiety. HAS biosynthesis continues via tethered intermediates with the succesive actions of the cytochrome P450 monooxygenase hasH, the O-methyltransferase hasC, and the FAD-linked oxidoreductase hasG. The resulting O-methylated diketopiperazine is then released from hasD. Finally, three O-methylated diketopiperazine molecules assemble in a trimeric complex with Fe(III) to produce hexadehydro-astechrome. This Aspergillus fumigatus (strain CBS 144.89 / FGSC A1163 / CEA10) (Neosartorya fumigata) protein is FAD-linked oxidoreductase hasG.